We begin with the raw amino-acid sequence, 511 residues long: MKQRALVSVSDKTGVVEFVKGLLEQGIEVISTGGTKKLLEENGLQVIGISEVTGFPEIMDGRVKTLHPNIHGGLLAVRDNETHVAQMNELGIEPIDFVVVNLYPFKETIAKPDVTFADAIENIDIGGPTMIRSAAKNHKFVSVIVDPVDYDVVLAELEENGEVKEETKRKLAAKVFRHTAAYDALISNYLTEQMGEESPETLTVTFEKKQDLRYGENPHQKATFYKAPFAATSSVAYAEQLHGKELSYNNINDADAALSIVKEFTEPAVVAVKHMNPCGVGVGTDIHEAYTRAYEADPVSIFGGIIAANREIDKSTAEKLHEIFLEIIIAPSFSKEALEVLQSKKNLRLLTVNIEKSTSASKKLTSVQGGLLVQEEDTLSLDESTISIPTKREPSEQEWKDLKLAWKVVKHVKSNAIVLAKDDMTIGVGAGQMNRVGSAKIAITQAGEKAQGSALASDAFFPMPDTLEEAAKAGITAIIQPGGSIRDEDSIKVADTYGIAMVFTGVRHFKH.

The MGS-like domain occupies 1 to 145; it reads MKQRALVSVS…KNHKFVSVIV (145 aa).

This sequence belongs to the PurH family.

It carries out the reaction (6R)-10-formyltetrahydrofolate + 5-amino-1-(5-phospho-beta-D-ribosyl)imidazole-4-carboxamide = 5-formamido-1-(5-phospho-D-ribosyl)imidazole-4-carboxamide + (6S)-5,6,7,8-tetrahydrofolate. The catalysed reaction is IMP + H2O = 5-formamido-1-(5-phospho-D-ribosyl)imidazole-4-carboxamide. Its pathway is purine metabolism; IMP biosynthesis via de novo pathway; 5-formamido-1-(5-phospho-D-ribosyl)imidazole-4-carboxamide from 5-amino-1-(5-phospho-D-ribosyl)imidazole-4-carboxamide (10-formyl THF route): step 1/1. The protein operates within purine metabolism; IMP biosynthesis via de novo pathway; IMP from 5-formamido-1-(5-phospho-D-ribosyl)imidazole-4-carboxamide: step 1/1. This is Bifunctional purine biosynthesis protein PurH from Bacillus cereus (strain AH187).